The sequence spans 138 residues: ATP synthase epsilon chain (138 aa).

The protein belongs to the ATPase epsilon chain family. F-type ATPases have 2 components, CF(1) - the catalytic core - and CF(0) - the membrane proton channel. CF(1) has five subunits: alpha(3), beta(3), gamma(1), delta(1), epsilon(1). CF(0) has three main subunits: a, b and c.

It is found in the cell membrane. In terms of biological role, produces ATP from ADP in the presence of a proton gradient across the membrane. The chain is ATP synthase epsilon chain (atpC) from Buchnera aphidicola subsp. Schizaphis graminum (strain Sg).